Consider the following 778-residue polypeptide: Pentatricopeptide repeat-containing protein At3g09650, chloroplastic (778 aa).

The transit peptide at 1-65 (MNILRPPTSS…RSASGTANSS (65 aa)) directs the protein to the chloroplast. PPR repeat units follow at residues 235–269 (DTAA…DCEP), 270–304 (DVLT…GIKV), and 305–339 (CMTT…RRDL). The tract at residues 351–381 (LKEKEEEEAEDDEDAFEDDEDSGYSARDEVS) is disordered. The span at 355–372 (EEEEAEDDEDAFEDDEDS) shows a compositional bias: acidic residues. PPR repeat units follow at residues 413 to 443 (DSRI…MRRQ), 451 to 485 (DEVT…GVPA), 486 to 521 (NRIT…GIEP), 522 to 556 (DVVS…GIAP), 557 to 587 (TKIS…MMND), 593 to 627 (DLIA…GFYP), and 628 to 658 (NVAT…IKER).

The protein belongs to the PPR family. P subfamily.

The protein localises to the plastid. It localises to the chloroplast stroma. Involved in the processing of polycistronic chloroplast psbB-psbT-psbH-petB-petD transcript. Could bind RNA. This is Pentatricopeptide repeat-containing protein At3g09650, chloroplastic (HCF152) from Arabidopsis thaliana (Mouse-ear cress).